The primary structure comprises 211 residues: MFISFEGIDASGKSTVMDLFAKYLKIKFPEKDIVTTFEPGGKNLKEALLIREFLLSKNNQISPYVEMLLFATARRIHLERLIWPALKAGKIVLCDRYIDSSIAYQGFGNGLDIDLVTSLNSLISENTFPDLTIFLDIKISKSFERMGIFRDHNRDRLENKGVEFYERVINGYEFLTKKNKNFFKIDGNGTYDEVLDLIIDFFEKYYASWPK.

7 to 14 (GIDASGKS) contacts ATP.

It belongs to the thymidylate kinase family.

The enzyme catalyses dTMP + ATP = dTDP + ADP. Phosphorylation of dTMP to form dTDP in both de novo and salvage pathways of dTTP synthesis. The chain is Thymidylate kinase from Mesomycoplasma hyopneumoniae (strain 7448) (Mycoplasma hyopneumoniae).